We begin with the raw amino-acid sequence, 355 residues long: D-alanine--D-alanine ligase (355 aa).

The ATP-grasp domain maps to 143 to 350; it reads KKIFSHLEIP…IDQLVAKLVD (208 aa). 178–233 is a binding site for ATP; the sequence is IEKLKLPVFVKPANSGSSLGISKAKTRSEIIKALQKAWEIDSRIVIEEGLDVRELE. Mg(2+) contacts are provided by D303, E317, and N319.

It belongs to the D-alanine--D-alanine ligase family. It depends on Mg(2+) as a cofactor. Mn(2+) is required as a cofactor.

It localises to the cytoplasm. The catalysed reaction is 2 D-alanine + ATP = D-alanyl-D-alanine + ADP + phosphate + H(+). It functions in the pathway cell wall biogenesis; peptidoglycan biosynthesis. In terms of biological role, cell wall formation. This Prochlorococcus marinus subsp. pastoris (strain CCMP1986 / NIES-2087 / MED4) protein is D-alanine--D-alanine ligase.